Here is a 614-residue protein sequence, read N- to C-terminus: BPI fold-containing family B member 4 (614 aa).

A signal peptide spans 1 to 18; the sequence is MWMAWCVAALSVVAVCGT. Asn273 carries N-linked (GlcNAc...) asparagine glycosylation. The cysteines at positions 295 and 332 are disulfide-linked.

It belongs to the BPI/LBP/Plunc superfamily. BPI/LBP family. As to expression, expressed in nasal tissue.

The protein resides in the secreted. It localises to the cytoplasm. May have the capacity to recognize and bind specific classes of odorants. May act as a carrier molecule, transporting odorants across the mucus layer to access receptor sites. May serve as a primary defense mechanism by recognizing and removing potentially harmful odorants or pathogenic microorganisms from the mucosa or clearing excess odorant from mucus to enable new odorant stimuli to be received. The chain is BPI fold-containing family B member 4 (BPIFB4) from Homo sapiens (Human).